Reading from the N-terminus, the 80-residue chain is NAD(P)H-quinone oxidoreductase subunit O (80 aa).

This sequence belongs to the complex I NdhO subunit family. In terms of assembly, NDH-1 can be composed of about 15 different subunits; different subcomplexes with different compositions have been identified which probably have different functions.

It localises to the cellular thylakoid membrane. It catalyses the reaction a plastoquinone + NADH + (n+1) H(+)(in) = a plastoquinol + NAD(+) + n H(+)(out). The enzyme catalyses a plastoquinone + NADPH + (n+1) H(+)(in) = a plastoquinol + NADP(+) + n H(+)(out). In terms of biological role, NDH-1 shuttles electrons from an unknown electron donor, via FMN and iron-sulfur (Fe-S) centers, to quinones in the respiratory and/or the photosynthetic chain. The immediate electron acceptor for the enzyme in this species is believed to be plastoquinone. Couples the redox reaction to proton translocation, and thus conserves the redox energy in a proton gradient. Cyanobacterial NDH-1 also plays a role in inorganic carbon-concentration. The sequence is that of NAD(P)H-quinone oxidoreductase subunit O from Prochlorococcus marinus (strain MIT 9515).